A 173-amino-acid polypeptide reads, in one-letter code: Thiol-disulfide oxidoreductase ResA (173 aa).

The chain crosses the membrane as a helical; Signal-anchor for type II membrane protein span at residues 10-29; it reads VIILLILSGAVGFTLYQGFF. The 139-residue stretch at 35–173 folds into the Thioredoxin domain; the sequence is MQIGKEAPNF…LEGYLKKITP (139 aa). A disulfide bridge links Cys-73 with Cys-76.

Belongs to the thioredoxin family. ResA subfamily.

It localises to the cell membrane. It functions in the pathway protein modification; cytochrome c assembly. In terms of biological role, thiol-disulfide oxidoreductase which is required in disulfide reduction during c-type cytochrome synthesis. May accept reducing equivalents from CcdA, leading to breakage of disulfide bonds in apocytochrome c; following this reduction heme can be covalently attached. This is Thiol-disulfide oxidoreductase ResA from Bacillus thuringiensis (strain Al Hakam).